Consider the following 544-residue polypeptide: NADH-quinone oxidoreductase subunit C/D (544 aa).

An NADH dehydrogenase I subunit C region spans residues 1-138 (MLNCDMLIDS…KGQICTETED (138 aa)). The tract at residues 161–544 (MLLNVGPSHP…MNFIAGEFDR (384 aa)) is NADH dehydrogenase I subunit D.

This sequence in the N-terminal section; belongs to the complex I 30 kDa subunit family. It in the C-terminal section; belongs to the complex I 49 kDa subunit family. NDH-1 is composed of 13 different subunits. Subunits NuoB, CD, E, F, and G constitute the peripheral sector of the complex.

The protein resides in the cell inner membrane. The enzyme catalyses a quinone + NADH + 5 H(+)(in) = a quinol + NAD(+) + 4 H(+)(out). Its function is as follows. NDH-1 shuttles electrons from NADH, via FMN and iron-sulfur (Fe-S) centers, to quinones in the respiratory chain. The immediate electron acceptor for the enzyme in this species is believed to be ubiquinone. Couples the redox reaction to proton translocation (for every two electrons transferred, four hydrogen ions are translocated across the cytoplasmic membrane), and thus conserves the redox energy in a proton gradient. The sequence is that of NADH-quinone oxidoreductase subunit C/D from Aliarcobacter butzleri (strain RM4018) (Arcobacter butzleri).